The sequence spans 355 residues: Guanine nucleotide-binding protein G(i) subunit alpha-2 (355 aa).

A lipid anchor (N-myristoyl glycine) is attached at Gly2. Cys3 is lipidated: S-palmitoyl cysteine. The G-alpha domain maps to 32–355 (REVKLLLLGA…KNNLKDCGLF (324 aa)). The tract at residues 35 to 48 (KLLLLGAGESGKST) is G1 motif. GTP contacts are provided by residues 40–47 (GAGESGKS), 176–182 (LRTRVKT), 201–205 (DVGGQ), 270–273 (NKKD), and Ala327. Ser47 and Thr182 together coordinate Mg(2+). Residues 174-182 (DVLRTRVKT) form a G2 motif region. Residues 197 to 206 (FKMFDVGGQR) are G3 motif. Residues 266-273 (ILFLNKKD) are G4 motif. The tract at residues 325–330 (TCATDT) is G5 motif.

This sequence belongs to the G-alpha family. G(i/o/t/z) subfamily. As to quaternary structure, g proteins are composed of 3 units; alpha, beta and gamma. The alpha chain contains the guanine nucleotide binding site. In this context, interacts with GNB2. Interacts with UNC5B. Interacts with GPSM1. Interacts with RGS12 and RGS14. Interacts (inactive GDP-bound form) with NUCB1 (via GBA motif); the interaction leads to activation of GNAI3. Interacts (inactive GDP-bound form) with CCDC88C/DAPLE (via GBA motif). Interacts (inactive GDP-bound form) with CCDC8A/GIV (via GBA motif). In terms of tissue distribution, ubiquitously expressed. Most abundant in the lung and in the spleen.

The protein resides in the cytoplasm. It is found in the cytoskeleton. Its subcellular location is the microtubule organizing center. It localises to the centrosome. The protein localises to the cell membrane. The protein resides in the membrane. In terms of biological role, guanine nucleotide-binding proteins (G proteins) are involved as modulators or transducers in various transmembrane signaling systems. The G(i) proteins are involved in hormonal regulation of adenylate cyclase: they inhibit the cyclase in response to beta-adrenergic stimuli. May play a role in cell division. This is Guanine nucleotide-binding protein G(i) subunit alpha-2 (GNAI2) from Cavia porcellus (Guinea pig).